We begin with the raw amino-acid sequence, 242 residues long: Small ribosomal subunit protein uS3 (242 aa).

In terms of domain architecture, KH type-2 spans 39 to 110 (IRKFIHKKYG…QVRINVVEVE (72 aa)). Residues 216 to 242 (QTMPVGANPRRRASRRPQQFEDRSNEG) are disordered. Basic and acidic residues predominate over residues 233-242 (QQFEDRSNEG).

This sequence belongs to the universal ribosomal protein uS3 family. Part of the 30S ribosomal subunit. Forms a tight complex with proteins S10 and S14.

In terms of biological role, binds the lower part of the 30S subunit head. Binds mRNA in the 70S ribosome, positioning it for translation. The protein is Small ribosomal subunit protein uS3 of Synechococcus sp. (strain CC9902).